A 491-amino-acid polypeptide reads, in one-letter code: Ketol-acid reductoisomerase (NADP(+)) (491 aa).

The KARI N-terminal Rossmann domain maps to 15–208 (AQLGKCRFMA…GGHRAGVLES (194 aa)). NADP(+) contacts are provided by residues 45-48 (CGAQ), arginine 68, arginine 76, serine 78, and 108-110 (DKQ). Residue histidine 132 is part of the active site. Glycine 158 is a binding site for NADP(+). 2 consecutive KARI C-terminal knotted domains span residues 209-344 (SFVA…NAPQ) and 345-484 (FEGK…MTDM). Residues aspartate 217, glutamate 221, glutamate 389, and glutamate 393 each coordinate Mg(2+). Position 414 (serine 414) interacts with substrate.

The protein belongs to the ketol-acid reductoisomerase family. Mg(2+) serves as cofactor.

It carries out the reaction (2R)-2,3-dihydroxy-3-methylbutanoate + NADP(+) = (2S)-2-acetolactate + NADPH + H(+). The enzyme catalyses (2R,3R)-2,3-dihydroxy-3-methylpentanoate + NADP(+) = (S)-2-ethyl-2-hydroxy-3-oxobutanoate + NADPH + H(+). The protein operates within amino-acid biosynthesis; L-isoleucine biosynthesis; L-isoleucine from 2-oxobutanoate: step 2/4. It functions in the pathway amino-acid biosynthesis; L-valine biosynthesis; L-valine from pyruvate: step 2/4. Its function is as follows. Involved in the biosynthesis of branched-chain amino acids (BCAA). Catalyzes an alkyl-migration followed by a ketol-acid reduction of (S)-2-acetolactate (S2AL) to yield (R)-2,3-dihydroxy-isovalerate. In the isomerase reaction, S2AL is rearranged via a Mg-dependent methyl migration to produce 3-hydroxy-3-methyl-2-ketobutyrate (HMKB). In the reductase reaction, this 2-ketoacid undergoes a metal-dependent reduction by NADPH to yield (R)-2,3-dihydroxy-isovalerate. The protein is Ketol-acid reductoisomerase (NADP(+)) of Serratia proteamaculans (strain 568).